Reading from the N-terminus, the 713-residue chain is Phosphoribosylformylglycinamidine synthase subunit PurL (713 aa).

The active site involves His34. 2 residues coordinate ATP: Tyr37 and Arg73. Mg(2+) is bound at residue Glu75. Substrate is bound by residues 76 to 79 (SHNH) and Arg98. The Proton acceptor role is filled by His77. Asp99 provides a ligand contact to Mg(2+). Gln221 lines the substrate pocket. Asp249 lines the Mg(2+) pocket. 292–294 (ESQ) is a binding site for substrate. 2 residues coordinate ATP: Asp474 and Gly511. Ser514 provides a ligand contact to substrate.

This sequence belongs to the FGAMS family. As to quaternary structure, monomer. Part of the FGAM synthase complex composed of 1 PurL, 1 PurQ and 2 PurS subunits.

It localises to the cytoplasm. It catalyses the reaction N(2)-formyl-N(1)-(5-phospho-beta-D-ribosyl)glycinamide + L-glutamine + ATP + H2O = 2-formamido-N(1)-(5-O-phospho-beta-D-ribosyl)acetamidine + L-glutamate + ADP + phosphate + H(+). The protein operates within purine metabolism; IMP biosynthesis via de novo pathway; 5-amino-1-(5-phospho-D-ribosyl)imidazole from N(2)-formyl-N(1)-(5-phospho-D-ribosyl)glycinamide: step 1/2. In terms of biological role, part of the phosphoribosylformylglycinamidine synthase complex involved in the purines biosynthetic pathway. Catalyzes the ATP-dependent conversion of formylglycinamide ribonucleotide (FGAR) and glutamine to yield formylglycinamidine ribonucleotide (FGAM) and glutamate. The FGAM synthase complex is composed of three subunits. PurQ produces an ammonia molecule by converting glutamine to glutamate. PurL transfers the ammonia molecule to FGAR to form FGAM in an ATP-dependent manner. PurS interacts with PurQ and PurL and is thought to assist in the transfer of the ammonia molecule from PurQ to PurL. The protein is Phosphoribosylformylglycinamidine synthase subunit PurL of Ignicoccus hospitalis (strain KIN4/I / DSM 18386 / JCM 14125).